A 256-amino-acid chain; its full sequence is Large ribosomal subunit protein eL8B (256 aa).

A disordered region spans residues 1-37; that stretch reads MAPGKKVAPAPFGAKSTKSNKAKNPLTHSTPKNFGIG.

This sequence belongs to the eukaryotic ribosomal protein eL8 family. As to quaternary structure, component of the large ribosomal subunit (LSU). Mature yeast ribosomes consist of a small (40S) and a large (60S) subunit. The 40S small subunit contains 1 molecule of ribosomal RNA (18S rRNA) and 33 different proteins (encoded by 57 genes). The large 60S subunit contains 3 rRNA molecules (25S, 5.8S and 5S rRNA) and 46 different proteins (encoded by 81 genes).

Its subcellular location is the cytoplasm. Its function is as follows. Component of the ribosome, a large ribonucleoprotein complex responsible for the synthesis of proteins in the cell. The small ribosomal subunit (SSU) binds messenger RNAs (mRNAs) and translates the encoded message by selecting cognate aminoacyl-transfer RNA (tRNA) molecules. The large subunit (LSU) contains the ribosomal catalytic site termed the peptidyl transferase center (PTC), which catalyzes the formation of peptide bonds, thereby polymerizing the amino acids delivered by tRNAs into a polypeptide chain. The nascent polypeptides leave the ribosome through a tunnel in the LSU and interact with protein factors that function in enzymatic processing, targeting, and the membrane insertion of nascent chains at the exit of the ribosomal tunnel. This Saccharomyces cerevisiae (strain ATCC 204508 / S288c) (Baker's yeast) protein is Large ribosomal subunit protein eL8B.